Here is a 206-residue protein sequence, read N- to C-terminus: FMN-dependent NADH:quinone oxidoreductase (206 aa).

FMN contacts are provided by residues Ser-9, 15–17, 95–98, and 139–142; these read SVS, MYNF, and SRGG.

It belongs to the azoreductase type 1 family. In terms of assembly, homodimer. The cofactor is FMN.

It catalyses the reaction 2 a quinone + NADH + H(+) = 2 a 1,4-benzosemiquinone + NAD(+). It carries out the reaction N,N-dimethyl-1,4-phenylenediamine + anthranilate + 2 NAD(+) = 2-(4-dimethylaminophenyl)diazenylbenzoate + 2 NADH + 2 H(+). Its function is as follows. Quinone reductase that provides resistance to thiol-specific stress caused by electrophilic quinones. In terms of biological role, also exhibits azoreductase activity. Catalyzes the reductive cleavage of the azo bond in aromatic azo compounds to the corresponding amines. The chain is FMN-dependent NADH:quinone oxidoreductase from Legionella pneumophila subsp. pneumophila (strain Philadelphia 1 / ATCC 33152 / DSM 7513).